The following is a 303-amino-acid chain: 2-dehydropantoate 2-reductase (303 aa).

NADP(+) contacts are provided by residues 7–12 (GCGALG), Asn98, and Ala122. A substrate-binding site is contributed by Asn98. Lys176 serves as the catalytic Proton donor. Residues Asn180, Asn184, Asn194, and Ser244 each coordinate substrate. Glu256 serves as a coordination point for NADP(+).

Belongs to the ketopantoate reductase family. Monomer.

The protein localises to the cytoplasm. The enzyme catalyses (R)-pantoate + NADP(+) = 2-dehydropantoate + NADPH + H(+). The protein operates within cofactor biosynthesis; (R)-pantothenate biosynthesis; (R)-pantoate from 3-methyl-2-oxobutanoate: step 2/2. Functionally, catalyzes the NADPH-dependent reduction of ketopantoate into pantoic acid. Has a strong preference for NADPH over NADH as the electron acceptor. Pantoate, ketoisovalerate, oxaloacetate, pyruvate, 3-hydroxypyruvate, alpha-ketoglutarate, alpha-ketobutyrate, and acetaldehyde cannot serve as substrates for reduction. This Salmonella typhimurium (strain LT2 / SGSC1412 / ATCC 700720) protein is 2-dehydropantoate 2-reductase.